Here is a 230-residue protein sequence, read N- to C-terminus: Probable fimbrial chaperone SfmC (230 aa).

The first 23 residues, 1–23 (MMTKIKLLMLIIFYLIISASAHA), serve as a signal peptide directing secretion.

It belongs to the periplasmic pilus chaperone family.

It is found in the periplasm. Its function is as follows. Part of the sfmACDHF fimbrial operon. Could contribute to adhesion to various surfaces in specific environmental niches. Increases adhesion to eukaryotic T24 bladder epithelial cells in the absence of fim genes. The protein is Probable fimbrial chaperone SfmC (sfmC) of Escherichia coli (strain K12).